The sequence spans 247 residues: Granzyme B(G,H) (247 aa).

A signal peptide spans 1–18; sequence MKILLLLLTLSLASRTKA. A propeptide spans 19–20 (activation peptide); it reads GE. In terms of domain architecture, Peptidase S1 spans 21-245; the sequence is IIGGHEVKPH…FLSWIKKTMK (225 aa). Cysteine 49 and cysteine 65 are disulfide-bonded. The active-site Charge relay system is histidine 64. Residue asparagine 71 is glycosylated (N-linked (GlcNAc...) asparagine). Aspartate 108 functions as the Charge relay system in the catalytic mechanism. 2 cysteine pairs are disulfide-bonded: cysteine 142/cysteine 209 and cysteine 173/cysteine 188. A glycan (N-linked (GlcNAc...) asparagine) is linked at asparagine 182. The active-site Charge relay system is the serine 203.

Belongs to the peptidase S1 family. Granzyme subfamily.

The protein localises to the secreted. It is found in the cytolytic granule. It catalyses the reaction Preferential cleavage: -Asp-|-Xaa- &gt;&gt; -Asn-|-Xaa- &gt; -Met-|-Xaa-, -Ser-|-Xaa-.. Inactivated by the serine protease inhibitor diisopropylfluorophosphate. Functionally, abundant protease in the cytosolic granules of cytotoxic T-cells and NK-cells which activates caspase-independent pyroptosis when delivered into the target cell through the immunological synapse. It cleaves after Asp. Once delivered into the target cell, acts by catalyzing cleavage of gasdermin-E (GSDME), releasing the pore-forming moiety of GSDME, thereby triggering pyroptosis and target cell death. Seems to be linked to an activation cascade of caspases (aspartate-specific cysteine proteases) responsible for apoptosis execution. Cleaves caspase-3 and -9 (CASP3 and CASP9, respectively) to give rise to active enzymes mediating apoptosis. Cleaves and activates CASP7 in response to bacterial infection, promoting plasma membrane repair. This chain is Granzyme B(G,H) (Gzmb), found in Mus musculus (Mouse).